The following is a 65-amino-acid chain: Large ribosomal subunit protein bL28 (65 aa).

Positions 1–21 (MPGRDQLTGQKALSGNKRSHA) are disordered.

The protein belongs to the bacterial ribosomal protein bL28 family.

The protein is Large ribosomal subunit protein bL28 of Metamycoplasma arthritidis (strain 158L3-1) (Mycoplasma arthritidis).